The primary structure comprises 313 residues: Ribose-phosphate pyrophosphokinase (313 aa).

ATP-binding positions include Asp37 to Glu39 and Arg96 to Gln97. Mg(2+) contacts are provided by His131 and Asp170. Lys193 is an active-site residue. Residues Arg195, Asp219, and Asp223 to Thr227 contribute to the D-ribose 5-phosphate site.

The protein belongs to the ribose-phosphate pyrophosphokinase family. Class I subfamily. In terms of assembly, homohexamer. It depends on Mg(2+) as a cofactor.

It is found in the cytoplasm. It catalyses the reaction D-ribose 5-phosphate + ATP = 5-phospho-alpha-D-ribose 1-diphosphate + AMP + H(+). It participates in metabolic intermediate biosynthesis; 5-phospho-alpha-D-ribose 1-diphosphate biosynthesis; 5-phospho-alpha-D-ribose 1-diphosphate from D-ribose 5-phosphate (route I): step 1/1. In terms of biological role, involved in the biosynthesis of the central metabolite phospho-alpha-D-ribosyl-1-pyrophosphate (PRPP) via the transfer of pyrophosphoryl group from ATP to 1-hydroxyl of ribose-5-phosphate (Rib-5-P). The sequence is that of Ribose-phosphate pyrophosphokinase from Pseudomonas putida (strain ATCC 47054 / DSM 6125 / CFBP 8728 / NCIMB 11950 / KT2440).